The following is a 126-amino-acid chain: UPF0332 protein glr0978 (126 aa).

Belongs to the UPF0332 family.

The protein is UPF0332 protein glr0978 of Gloeobacter violaceus (strain ATCC 29082 / PCC 7421).